The sequence spans 322 residues: 4-hydroxythreonine-4-phosphate dehydrogenase (322 aa).

Thr132 is a substrate binding site. A divalent metal cation-binding residues include His160, His205, and His260. Lys268, Asn277, and Arg286 together coordinate substrate.

This sequence belongs to the PdxA family. As to quaternary structure, homodimer. Zn(2+) serves as cofactor. Mg(2+) is required as a cofactor. Requires Co(2+) as cofactor.

The protein localises to the cytoplasm. The enzyme catalyses 4-(phosphooxy)-L-threonine + NAD(+) = 3-amino-2-oxopropyl phosphate + CO2 + NADH. It participates in cofactor biosynthesis; pyridoxine 5'-phosphate biosynthesis; pyridoxine 5'-phosphate from D-erythrose 4-phosphate: step 4/5. Its function is as follows. Catalyzes the NAD(P)-dependent oxidation of 4-(phosphooxy)-L-threonine (HTP) into 2-amino-3-oxo-4-(phosphooxy)butyric acid which spontaneously decarboxylates to form 3-amino-2-oxopropyl phosphate (AHAP). The sequence is that of 4-hydroxythreonine-4-phosphate dehydrogenase from Xanthomonas oryzae pv. oryzae (strain PXO99A).